The following is a 469-amino-acid chain: UDP-N-acetylmuramoylalanine--D-glutamate ligase (469 aa).

110–116 serves as a coordination point for ATP; that stretch reads GTNGKST.

It belongs to the MurCDEF family.

The protein localises to the cytoplasm. The catalysed reaction is UDP-N-acetyl-alpha-D-muramoyl-L-alanine + D-glutamate + ATP = UDP-N-acetyl-alpha-D-muramoyl-L-alanyl-D-glutamate + ADP + phosphate + H(+). It participates in cell wall biogenesis; peptidoglycan biosynthesis. Its function is as follows. Cell wall formation. Catalyzes the addition of glutamate to the nucleotide precursor UDP-N-acetylmuramoyl-L-alanine (UMA). In Synechococcus sp. (strain JA-3-3Ab) (Cyanobacteria bacterium Yellowstone A-Prime), this protein is UDP-N-acetylmuramoylalanine--D-glutamate ligase.